Here is a 57-residue protein sequence, read N- to C-terminus: Large ribosomal subunit protein bL32 (57 aa).

Positions 1 to 19 are enriched in basic residues; that stretch reads MATPKRRMSRANTRSRRSQ. The interval 1 to 20 is disordered; the sequence is MATPKRRMSRANTRSRRSQW.

Belongs to the bacterial ribosomal protein bL32 family.

The sequence is that of Large ribosomal subunit protein bL32 from Mycobacterium marinum (strain ATCC BAA-535 / M).